The primary structure comprises 508 residues: Photosystem II CP47 reaction center protein (508 aa).

Transmembrane regions (helical) follow at residues 21–36 (SVHI…WAGS), 101–115 (IMLS…IWHW), 140–156 (GIHL…FGAF), 203–218 (IAAG…FHLS), 237–252 (VLSS…AFVV), and 457–472 (SFAL…HGAR).

The protein belongs to the PsbB/PsbC family. PsbB subfamily. In terms of assembly, PSII is composed of 1 copy each of membrane proteins PsbA, PsbB, PsbC, PsbD, PsbE, PsbF, PsbH, PsbI, PsbJ, PsbK, PsbL, PsbM, PsbT, PsbX, PsbY, PsbZ, Psb30/Ycf12, at least 3 peripheral proteins of the oxygen-evolving complex and a large number of cofactors. It forms dimeric complexes. Requires Binds multiple chlorophylls. PSII binds additional chlorophylls, carotenoids and specific lipids. as cofactor.

The protein resides in the plastid. It localises to the chloroplast thylakoid membrane. Functionally, one of the components of the core complex of photosystem II (PSII). It binds chlorophyll and helps catalyze the primary light-induced photochemical processes of PSII. PSII is a light-driven water:plastoquinone oxidoreductase, using light energy to abstract electrons from H(2)O, generating O(2) and a proton gradient subsequently used for ATP formation. This Piper cenocladum (Ant piper) protein is Photosystem II CP47 reaction center protein.